Reading from the N-terminus, the 184-residue chain is Probable DNA-directed RNA polymerase subunit delta (184 aa).

Positions 14 to 81 (LSMIEVARAI…GENVWALRSW (68 aa)) constitute an HTH HARE-type domain. 2 disordered regions span residues 88–107 (DEEVNHPEDEEEDDSRKHHK) and 118–184 (GDDD…DEDD). Residues 118-164 (GDDDIIDYDNDDPEDDDLDAATDDSDDDYSDDDSDYDEDNDDADDVL) show a composition bias toward acidic residues.

It belongs to the RpoE family. RNAP is composed of a core of 2 alpha, a beta and a beta' subunits. The core is associated with a delta subunit and one of several sigma factors.

Participates in both the initiation and recycling phases of transcription. In the presence of the delta subunit, RNAP displays an increased specificity of transcription, a decreased affinity for nucleic acids, and an increased efficiency of RNA synthesis because of enhanced recycling. The sequence is that of Probable DNA-directed RNA polymerase subunit delta from Lactobacillus acidophilus (strain ATCC 700396 / NCK56 / N2 / NCFM).